Here is a 183-residue protein sequence, read N- to C-terminus: Glutathione-regulated potassium-efflux system ancillary protein KefG (183 aa).

The protein belongs to the NAD(P)H dehydrogenase (quinone) family. KefG subfamily. In terms of assembly, interacts with KefB.

It is found in the cell inner membrane. It catalyses the reaction a quinone + NADH + H(+) = a quinol + NAD(+). The catalysed reaction is a quinone + NADPH + H(+) = a quinol + NADP(+). Its function is as follows. Regulatory subunit of a potassium efflux system that confers protection against electrophiles. Required for full activity of KefB. This Shigella flexneri serotype 5b (strain 8401) protein is Glutathione-regulated potassium-efflux system ancillary protein KefG.